The chain runs to 256 residues: Chlorophyll a-b binding protein CP24 10A, chloroplastic (256 aa).

Transmembrane regions (helical) follow at residues 106-126 and 134-154; these read WAMA…IPWF and AIAP…MGWV.

The protein belongs to the ELIP/psbS family.

The protein resides in the plastid. It localises to the chloroplast thylakoid membrane. This Solanum lycopersicum (Tomato) protein is Chlorophyll a-b binding protein CP24 10A, chloroplastic (CAP10A).